A 383-amino-acid polypeptide reads, in one-letter code: F-box/kelch-repeat protein At2g22030 (383 aa).

An F-box domain is found at 23 to 71 (SLLFSSLPYDVVLNCLARVSRRYYPNLSCVSKSFQSLVRSPELAHMRSL). Kelch repeat units follow at residues 130–175 (KIYF…VVNG), 176–220 (KLYV…LMRY), and 269–317 (GVCV…GMVD).

The protein is F-box/kelch-repeat protein At2g22030 of Arabidopsis thaliana (Mouse-ear cress).